The sequence spans 88 residues: Small ribosomal subunit protein uS15c (88 aa).

It belongs to the universal ribosomal protein uS15 family. As to quaternary structure, part of the 30S ribosomal subunit.

It localises to the plastid. The protein resides in the chloroplast. This is Small ribosomal subunit protein uS15c (rps15) from Crucihimalaya wallichii (Rock-cress).